Reading from the N-terminus, the 190-residue chain is Imidazoleglycerol-phosphate dehydratase (190 aa).

The protein belongs to the imidazoleglycerol-phosphate dehydratase family.

It localises to the cytoplasm. It carries out the reaction D-erythro-1-(imidazol-4-yl)glycerol 3-phosphate = 3-(imidazol-4-yl)-2-oxopropyl phosphate + H2O. The protein operates within amino-acid biosynthesis; L-histidine biosynthesis; L-histidine from 5-phospho-alpha-D-ribose 1-diphosphate: step 6/9. The protein is Imidazoleglycerol-phosphate dehydratase of Methanococcus vannielii (strain ATCC 35089 / DSM 1224 / JCM 13029 / OCM 148 / SB).